Here is a 663-residue protein sequence, read N- to C-terminus: MSARLPVLSPPRWPRLLLLSLLLLGAVPGPRRSGAFYLPGLAPVNFCDEEKKSDECKAEIELFVNRLDSVESVLPYEYTAFDFCQASEGKRPSENLGQVLFGERIEPSPYKFTFNKKETCKLVCTKTYHTEKAEDKQKLEFLKKSMLLNYQHHWIVDNMPVTWCYDVEDGQRFCNPGFPIGCYITDKGHAKDACVISSDFHERDTFYIFNHVDIKIYYHVVETGSMGARLVAAKLEPKSFKHTHIDKPDCSGPPMDISNKASGEIKIAYTYSVSFEEDDKIRWASRWDYILESMPHTHIQWFSIMNSLVIVLFLSGMVAMIMLRTLHKDIARYNQMDSTEDAQEEFGWKLVHGDIFRPPRKGMLLSVFLGSGTQILIMTFVTLFFACLGFLSPANRGALMTCAVVLWVLLGTPAGYVAARFYKSFGGEKWKTNVLLTSFLCPGIVFADFFIMNLILWGEGSSAAIPFGTLVAILALWFCISVPLTFIGAYFGFKKNAIEHPVRTNQIPRQIPEQSFYTKPLPGIIMGGILPFGCIFIQLFFILNSIWSHQMYYMFGFLFLVFIILVITCSEATILLCYFHLCAEDYHWQWRSFLTSGFTAVYFLIYAVHYFFSKLQITGTASTILYFGYTMIMVLIFFLFTGTIGFFACFWFVTKIYSVVKVD.

The first 28 residues, 1–28, serve as a signal peptide directing secretion; that stretch reads MSARLPVLSPPRWPRLLLLSLLLLGAVP. Residues 29 to 300 are Lumenal-facing; the sequence is GPRRSGAFYL…LESMPHTHIQ (272 aa). Residues 301-321 form a helical membrane-spanning segment; the sequence is WFSIMNSLVIVLFLSGMVAMI. Over 322 to 374 the chain is Cytoplasmic; that stretch reads MLRTLHKDIARYNQMDSTEDAQEEFGWKLVHGDIFRPPRKGMLLSVFLGSGTQ. A helical membrane pass occupies residues 375 to 395; the sequence is ILIMTFVTLFFACLGFLSPAN. The Lumenal segment spans residues 396–398; sequence RGA. A helical transmembrane segment spans residues 399–419; sequence LMTCAVVLWVLLGTPAGYVAA. Over 420–437 the chain is Cytoplasmic; the sequence is RFYKSFGGEKWKTNVLLT. A helical transmembrane segment spans residues 438 to 458; sequence SFLCPGIVFADFFIMNLILWG. Topologically, residues 459-466 are lumenal; sequence EGSSAAIP. A helical transmembrane segment spans residues 467–487; sequence FGTLVAILALWFCISVPLTFI. Residues 488 to 522 are Cytoplasmic-facing; the sequence is GAYFGFKKNAIEHPVRTNQIPRQIPEQSFYTKPLP. The helical transmembrane segment at 523–543 threads the bilayer; it reads GIIMGGILPFGCIFIQLFFIL. Over 544-554 the chain is Lumenal; the sequence is NSIWSHQMYYM. The helical transmembrane segment at 555 to 575 threads the bilayer; sequence FGFLFLVFIILVITCSEATIL. The Cytoplasmic portion of the chain corresponds to 576 to 591; it reads LCYFHLCAEDYHWQWR. The helical transmembrane segment at 592 to 612 threads the bilayer; it reads SFLTSGFTAVYFLIYAVHYFF. Residues 613-631 lie on the Lumenal side of the membrane; it reads SKLQITGTASTILYFGYTM. Residues 632–652 traverse the membrane as a helical segment; sequence IMVLIFFLFTGTIGFFACFWF. Topologically, residues 653–663 are cytoplasmic; sequence VTKIYSVVKVD.

The protein belongs to the nonaspanin (TM9SF) (TC 9.A.2) family. As to expression, ubiquitously expressed. Especially abundant in pancreas, highly expressed in kidney, lower levels in heart, brain, skeletal muscle and placenta. Lowest expression in lung and liver.

It is found in the endosome membrane. The protein localises to the golgi outpost. The protein resides in the cytoplasm. Its subcellular location is the cytoskeleton. It localises to the microtubule organizing center. Functionally, in the intracellular compartments, may function as a channel or small molecule transporter. In Homo sapiens (Human), this protein is Transmembrane 9 superfamily member 2 (TM9SF2).